Consider the following 430-residue polypeptide: 3-phosphoshikimate 1-carboxyvinyltransferase (430 aa).

3-phosphoshikimate is bound by residues K20, S21, and R25. K20 is a phosphoenolpyruvate binding site. Residues G90 and R118 each contribute to the phosphoenolpyruvate site. 3-phosphoshikimate-binding residues include S163, S164, Q165, S191, D311, and K338. Phosphoenolpyruvate is bound at residue Q165. D311 (proton acceptor) is an active-site residue. Positions 342 and 383 each coordinate phosphoenolpyruvate.

It belongs to the EPSP synthase family. As to quaternary structure, monomer.

It is found in the cytoplasm. It carries out the reaction 3-phosphoshikimate + phosphoenolpyruvate = 5-O-(1-carboxyvinyl)-3-phosphoshikimate + phosphate. Its pathway is metabolic intermediate biosynthesis; chorismate biosynthesis. Functionally, catalyzes the transfer of the enolpyruvyl moiety of phosphoenolpyruvate (PEP) to the 5-hydroxyl of shikimate-3-phosphate (S3P) to produce enolpyruvyl shikimate-3-phosphate and inorganic phosphate. The sequence is that of 3-phosphoshikimate 1-carboxyvinyltransferase from Methanosarcina mazei (strain ATCC BAA-159 / DSM 3647 / Goe1 / Go1 / JCM 11833 / OCM 88) (Methanosarcina frisia).